The chain runs to 361 residues: Hsc70-interacting protein (361 aa).

The tract at residues 39–98 (GGTIPPAPASTSTDETSKGKAEEQPEEPVKSPEPESEESDLEIDNEGVIEPDNDDPQEMG) is disordered. Over residues 53-71 (ETSKGKAEEQPEEPVKSPE) the composition is skewed to basic and acidic residues. Residues 72–98 (PESEESDLEIDNEGVIEPDNDDPQEMG) are compositionally biased toward acidic residues. TPR repeat units follow at residues 112–145 (ANEK…NPCL), 147–179 (ILYA…NPDS), and 181–213 (QTYK…DYDE). A compositionally biased stretch (basic and acidic residues) spans 254 to 270 (KAREEHERAQREEEARR). The interval 254–292 (KAREEHERAQREEEARRQAGGAQFGGFPGGFPGGFPGAM) is disordered. Residues 275–292 (AQFGGFPGGFPGGFPGAM) show a composition bias toward gly residues. Positions 311 to 350 (DPEVLAAMQDPEVMAAFQDVAQNPANMSKYQNNPKVMSLI) constitute an STI1 domain.

Belongs to the FAM10 family. Homotetramer. Interacts with HSC70 as well as DNAJ homologs and HSP90.

It localises to the cytoplasm. In terms of biological role, one HIP oligomer binds the ATPase domains of at least two HSC70 molecules dependent on activation of the HSC70 ATPase by HSP40. Stabilizes the ADP state of HSC70 that has a high affinity for substrate protein. Through its own chaperone activity, it may contribute to the interaction of HSC70 with various target proteins. The polypeptide is Hsc70-interacting protein (ST13) (Gallus gallus (Chicken)).